The following is a 66-amino-acid chain: Large ribosomal subunit protein bL35 (66 aa).

Composition is skewed to basic residues over residues 1-16 (MPKM…RVKR) and 38-49 (TKQKRQLRKARL). Residues 1 to 49 (MPKMKTHRGAAKRVKRTASGQLKRSRAFTSHLFANKSTKQKRQLRKARL) form a disordered region.

This sequence belongs to the bacterial ribosomal protein bL35 family.

This chain is Large ribosomal subunit protein bL35, found in Staphylococcus aureus (strain MSSA476).